Consider the following 146-residue polypeptide: Hemoglobin subunit beta (146 aa).

Val-1 is subject to N-acetylvaline. The Globin domain maps to 2 to 146; the sequence is HLTAEEKDAV…VANALAHRYH (145 aa). Ser-44 is subject to Phosphoserine. N6-acetyllysine is present on Lys-59. Heme b is bound at residue His-63. Lys-82 is modified (N6-acetyllysine). His-92 provides a ligand contact to heme b. S-nitrosocysteine is present on Cys-93.

This sequence belongs to the globin family. In terms of assembly, heterotetramer of two alpha chains and two beta chains. Red blood cells.

Functionally, involved in oxygen transport from the lung to the various peripheral tissues. This chain is Hemoglobin subunit beta (HBB), found in Hippopotamus amphibius (Hippopotamus).